Reading from the N-terminus, the 131-residue chain is MAKRKQNVRSKRKVKKNIESGIVHIRSTFNNTIVTITDMQGNAISWATAGNMGFKGSRKSTPFAAQLASETAAKTAMDNGMRTVEVNVKGPGAGREAAIRALQAIGLEVTAIRDVTPVPHNGCRPPKRRRV.

This sequence belongs to the universal ribosomal protein uS11 family. Part of the 30S ribosomal subunit. Interacts with proteins S7 and S18. Binds to IF-3.

Located on the platform of the 30S subunit, it bridges several disparate RNA helices of the 16S rRNA. Forms part of the Shine-Dalgarno cleft in the 70S ribosome. The polypeptide is Small ribosomal subunit protein uS11 (Exiguobacterium sibiricum (strain DSM 17290 / CCUG 55495 / CIP 109462 / JCM 13490 / 255-15)).